The following is a 519-amino-acid chain: MKKLKLNYLLIGVVTLLLAVALWPAIPWSGKADNRIAAIQARGVLRVSTIATPLTMYRAGDTMSGLDYELSQAFADYLGVKLKITVRQNISQLFDDLDNNDADLLAAGLVYNEARSQHYQAGPIYYSVSQQMVYRVGSLRPRSLASIKEGQLTIAPGHVAQSELEQLKASKYPDLTWRVDPKLSSNELMLQVAQGTLDYTIADSVAISLFQRVHPQLAVALDLSDEQPVTWFSRRSSDNSLSAALLDFFNQINEDGTLARLEEKYLGHGNDFDYVDTRSFLRAVDSVLPELQPLFEKYATDIDWRLLAAISYQESHWDSQATSPTGVRGLMMLTRNTAQSLGLTDRLDAEQSISGGARYLKDMMSKVPESVPEEERIWFALAAYNMGYAHMLDARALTAKQKGNPDSWSDVKQRLPLLSQRPYYSKLTYGYARGHEAYAYVENIRKYQISLVGYLLEKEKQAAAAAQPKLVQSYPTNITPQGLFPSPFSSLPLGPFSQAGAGGKTHSALPNTLSPVSPR.

Residues 1–32 (MKKLKLNYLLIGVVTLLLAVALWPAIPWSGKA) form the signal peptide. A non-LT domain region spans residues 33–269 (DNRIAAIQAR…RLEEKYLGHG (237 aa)). Residues 270 to 519 (NDFDYVDTRS…PNTLSPVSPR (250 aa)) are LT domain. Residue Glu-314 is part of the active site. The segment at 495 to 519 (PFSQAGAGGKTHSALPNTLSPVSPR) is disordered. The segment covering 508-519 (ALPNTLSPVSPR) has biased composition (polar residues).

This sequence in the N-terminal section; belongs to the bacterial solute-binding protein 3 family. The protein in the C-terminal section; belongs to the transglycosylase Slt family.

It is found in the cell outer membrane. It catalyses the reaction Exolytic cleavage of the (1-&gt;4)-beta-glycosidic linkage between N-acetylmuramic acid (MurNAc) and N-acetylglucosamine (GlcNAc) residues in peptidoglycan, from either the reducing or the non-reducing ends of the peptidoglycan chains, with concomitant formation of a 1,6-anhydrobond in the MurNAc residue.. Functionally, murein-degrading enzyme that degrades murein glycan strands and insoluble, high-molecular weight murein sacculi, with the concomitant formation of a 1,6-anhydromuramoyl product. Lytic transglycosylases (LTs) play an integral role in the metabolism of the peptidoglycan (PG) sacculus. Their lytic action creates space within the PG sacculus to allow for its expansion as well as for the insertion of various structures such as secretion systems and flagella. The polypeptide is Membrane-bound lytic murein transglycosylase F (Cronobacter sakazakii (strain ATCC BAA-894) (Enterobacter sakazakii)).